The sequence spans 494 residues: Ketol-acid reductoisomerase (NADP(+)) (494 aa).

The KARI N-terminal Rossmann domain occupies 14–208 (LDQLGRCRFM…GGHRAGCLES (195 aa)). NADP(+) is bound by residues 45–48 (CGAQ), arginine 68, arginine 76, serine 78, and 108–110 (DKQ). Residue histidine 132 is part of the active site. Glycine 158 is an NADP(+) binding site. 2 KARI C-terminal knotted domains span residues 209–344 (SFVA…NYPS) and 345–487 (TDVE…MTDM). The Mg(2+) site is built by aspartate 217, glutamate 221, glutamate 389, and glutamate 393. Serine 414 is a substrate binding site.

This sequence belongs to the ketol-acid reductoisomerase family. Mg(2+) serves as cofactor.

The catalysed reaction is (2R)-2,3-dihydroxy-3-methylbutanoate + NADP(+) = (2S)-2-acetolactate + NADPH + H(+). It catalyses the reaction (2R,3R)-2,3-dihydroxy-3-methylpentanoate + NADP(+) = (S)-2-ethyl-2-hydroxy-3-oxobutanoate + NADPH + H(+). Its pathway is amino-acid biosynthesis; L-isoleucine biosynthesis; L-isoleucine from 2-oxobutanoate: step 2/4. It participates in amino-acid biosynthesis; L-valine biosynthesis; L-valine from pyruvate: step 2/4. Involved in the biosynthesis of branched-chain amino acids (BCAA). Catalyzes an alkyl-migration followed by a ketol-acid reduction of (S)-2-acetolactate (S2AL) to yield (R)-2,3-dihydroxy-isovalerate. In the isomerase reaction, S2AL is rearranged via a Mg-dependent methyl migration to produce 3-hydroxy-3-methyl-2-ketobutyrate (HMKB). In the reductase reaction, this 2-ketoacid undergoes a metal-dependent reduction by NADPH to yield (R)-2,3-dihydroxy-isovalerate. This Vibrio vulnificus (strain CMCP6) protein is Ketol-acid reductoisomerase (NADP(+)).